The primary structure comprises 85 residues: Putative membrane protein insertion efficiency factor (85 aa).

The protein belongs to the UPF0161 family.

The protein localises to the cell membrane. Could be involved in insertion of integral membrane proteins into the membrane. In Buchnera aphidicola subsp. Schizaphis graminum (strain Sg), this protein is Putative membrane protein insertion efficiency factor.